Here is a 706-residue protein sequence, read N- to C-terminus: Gamma-adducin (706 aa).

The segment covering 1-11 has biased composition (low complexity); the sequence is MSSDTSPAVVT. Positions 1 to 23 are disordered; that stretch reads MSSDTSPAVVTTPPPPSMPHKER. S2 carries the post-translational modification N-acetylserine. A phosphoserine mark is found at S31, S42, S64, S402, S414, S423, S442, and S461. Disordered regions lie at residues 471–495, 534–556, 574–610, and 651–706; these read AEDSSKVSSGTPIKIEDPNQFVPLN, PPSTMQFDDDDQGPPAPPNPFSH, QGLDDAEQGSLSDDAASVSQIQSQTQSPQSVPERLEE, and TSTT…KVEA. K484 participates in a covalent cross-link: Glycyl lysine isopeptide (Lys-Gly) (interchain with G-Cter in SUMO2). Residues S583, S585, and S590 each carry the phosphoserine modification. 2 stretches are compositionally biased toward low complexity: residues 590-605 and 651-662; these read SVSQIQSQTQSPQSVP and TSTTIENIEITI. Phosphoserine occurs at positions 673, 677, 679, 681, and 683. Residues 682-706 are compositionally biased toward basic residues; the sequence is PSKKKKKFRTPSFLKKNKKKEKVEA. An interaction with calmodulin region spans residues 684–701; the sequence is KKKKKFRTPSFLKKNKKK.

Belongs to the aldolase class II family. Adducin subfamily. In terms of assembly, heterodimer of an alpha and a gamma subunit. In terms of processing, sumoylated. Post-translationally, proteolytically cleaved by asparagine endopeptidase (AEP) into 2 fragments. Overexpression of the 1-357 fragment induces neuronal apoptosis, and overexpression of either 1-357 or 358-706 fragment increases the degeneration of dendritic spines. Overexpression of the 1-357 fragment impairs neurite outgrowth by downregulating the expression of Rac2, and induces synaptic dysfunction and cognitive impairments in tau P301S transgenic mice, a mouse model for Alzheimer disease (AD). Cleavage fragment 1-357 is expressed in the brain and the expression increases with age (at protein level). The fragment is expressed in the cortex, hippocampal CA1 region and hippocampal dentate gyrus in tau P301S transgenic mice, a mouse model for Alzheimer disease (AD) (at protein level). The fragment is only weakly expressed in non-transgenic mouse brain sections (at protein level).

The protein localises to the cytoplasm. The protein resides in the cytoskeleton. Its subcellular location is the cell membrane. In terms of biological role, membrane-cytoskeleton-associated protein that promotes the assembly of the spectrin-actin network. Plays a role in actin filament capping. Binds to calmodulin. Involved in myogenic reactivity of the renal afferent arteriole (Af-art), renal interlobular arteries and middle cerebral artery (MCA) to increased perfusion pressure. Involved in regulation of potassium channels in the vascular smooth muscle cells (VSMCs) of the Af-art and MCA ex vivo. Involved in regulation of glomerular capillary pressure, glomerular filtration rate (GFR) and glomerular nephrin expression in response to hypertension. Involved in renal blood flow (RBF) autoregulation. Plays a role in podocyte structure and function. Regulates globular monomer actin (G-actin) and filamentous polymer actin (F-actin) ratios in the primary podocytes affecting actin cytoskeleton organization. Regulates expression of synaptopodin, RhoA, Rac1 and CDC42 in the renal cortex and the primary podocytes. Regulates expression of nephrin in the glomeruli and in the primary podocytes, expression of nephrin and podocinin in the renal cortex, and expression of focal adhesion proteins integrin alpha-3 and integrin beta-1 in the glomeruli. Involved in cell migration and cell adhesion of podocytes, and in podocyte foot process effacement. Regulates expression of profibrotics markers MMP2, MMP9, TGF beta-1, tubular tight junction protein E-cadherin, and mesenchymal markers vimentin and alpha-SMA. Promotes the growth of neurites. This is Gamma-adducin (Add3) from Mus musculus (Mouse).